A 31-amino-acid chain; its full sequence is Protein YmiC (31 aa).

A helical membrane pass occupies residues Trp9–Ile29.

Its subcellular location is the cell inner membrane. The polypeptide is Protein YmiC (Escherichia coli (strain K12)).